Here is a 139-residue protein sequence, read N- to C-terminus: NADH-quinone oxidoreductase subunit A (139 aa).

3 consecutive transmembrane segments (helical) span residues 16-36 (GLFI…ASLL), 69-89 (LVAM…AWAV), and 94-114 (VGWE…AGLV).

It belongs to the complex I subunit 3 family. In terms of assembly, NDH-1 is composed of 14 different subunits. Subunits NuoA, H, J, K, L, M, N constitute the membrane sector of the complex.

Its subcellular location is the cell inner membrane. The enzyme catalyses a quinone + NADH + 5 H(+)(in) = a quinol + NAD(+) + 4 H(+)(out). Its function is as follows. NDH-1 shuttles electrons from NADH, via FMN and iron-sulfur (Fe-S) centers, to quinones in the respiratory chain. The immediate electron acceptor for the enzyme in this species is believed to be ubiquinone. Couples the redox reaction to proton translocation (for every two electrons transferred, four hydrogen ions are translocated across the cytoplasmic membrane), and thus conserves the redox energy in a proton gradient. The sequence is that of NADH-quinone oxidoreductase subunit A from Chromohalobacter salexigens (strain ATCC BAA-138 / DSM 3043 / CIP 106854 / NCIMB 13768 / 1H11).